Reading from the N-terminus, the 363-residue chain is Phospho-N-acetylmuramoyl-pentapeptide-transferase (363 aa).

Transmembrane regions (helical) follow at residues 33-53 (YAVL…GVLP), 82-102 (GVIF…PSFV), 105-125 (LILL…CAQV), 133-153 (GALD…FYFH), 166-186 (PVFV…WMSI), 198-218 (LSGA…YFLL), 227-247 (LLVP…ALAG), 271-291 (ALGF…LLLM), 295-315 (VILV…FFHV), and 340-360 (VLLR…GVLF).

The protein belongs to the glycosyltransferase 4 family. MraY subfamily. Mg(2+) is required as a cofactor.

It localises to the cell inner membrane. It catalyses the reaction UDP-N-acetyl-alpha-D-muramoyl-L-alanyl-gamma-D-glutamyl-meso-2,6-diaminopimeloyl-D-alanyl-D-alanine + di-trans,octa-cis-undecaprenyl phosphate = di-trans,octa-cis-undecaprenyl diphospho-N-acetyl-alpha-D-muramoyl-L-alanyl-D-glutamyl-meso-2,6-diaminopimeloyl-D-alanyl-D-alanine + UMP. It functions in the pathway cell wall biogenesis; peptidoglycan biosynthesis. Its function is as follows. Catalyzes the initial step of the lipid cycle reactions in the biosynthesis of the cell wall peptidoglycan: transfers peptidoglycan precursor phospho-MurNAc-pentapeptide from UDP-MurNAc-pentapeptide onto the lipid carrier undecaprenyl phosphate, yielding undecaprenyl-pyrophosphoryl-MurNAc-pentapeptide, known as lipid I. The sequence is that of Phospho-N-acetylmuramoyl-pentapeptide-transferase from Treponema pallidum (strain Nichols).